The following is a 116-amino-acid chain: Ribosome-binding factor A (116 aa).

The protein belongs to the RbfA family. As to quaternary structure, monomer. Binds 30S ribosomal subunits, but not 50S ribosomal subunits or 70S ribosomes.

The protein localises to the cytoplasm. Functionally, one of several proteins that assist in the late maturation steps of the functional core of the 30S ribosomal subunit. Associates with free 30S ribosomal subunits (but not with 30S subunits that are part of 70S ribosomes or polysomes). Required for efficient processing of 16S rRNA. May interact with the 5'-terminal helix region of 16S rRNA. This Clostridium botulinum (strain Eklund 17B / Type B) protein is Ribosome-binding factor A.